The sequence spans 347 residues: NADH-ubiquinone oxidoreductase chain 2 (347 aa).

11 helical membrane-spanning segments follow: residues 3–23, 25–45, 59–79, 96–116, 122–142, 148–168, 178–198, 202–222, 240–260, 276–296, and 326–346; these read PLIL…VMMS, HWLM…PLLM, YFLT…INLM, IIMT…FWVP, ISLT…LSIL, VINP…GGWG, ILAY…AFNP, LLNL…FMVA, ITTS…LAGF, IILA…YIRL, and LPPL…MILL.

The protein belongs to the complex I subunit 2 family. As to quaternary structure, core subunit of respiratory chain NADH dehydrogenase (Complex I) which is composed of 45 different subunits. Interacts with TMEM242.

The protein resides in the mitochondrion inner membrane. It catalyses the reaction a ubiquinone + NADH + 5 H(+)(in) = a ubiquinol + NAD(+) + 4 H(+)(out). Its function is as follows. Core subunit of the mitochondrial membrane respiratory chain NADH dehydrogenase (Complex I) which catalyzes electron transfer from NADH through the respiratory chain, using ubiquinone as an electron acceptor. Essential for the catalytic activity and assembly of complex I. In Peropteryx kappleri (Greater dog-like bat), this protein is NADH-ubiquinone oxidoreductase chain 2.